Here is a 368-residue protein sequence, read N- to C-terminus: tRNA(Met) cytidine acetate ligase (368 aa).

Residues 7-20, Gly96, Asn152, and Arg175 contribute to the ATP site; that span reads IAEF…HKYL.

This sequence belongs to the TmcAL family.

Its subcellular location is the cytoplasm. It catalyses the reaction cytidine(34) in elongator tRNA(Met) + acetate + ATP = N(4)-acetylcytidine(34) in elongator tRNA(Met) + AMP + diphosphate. Its function is as follows. Catalyzes the formation of N(4)-acetylcytidine (ac(4)C) at the wobble position of elongator tRNA(Met), using acetate and ATP as substrates. First activates an acetate ion to form acetyladenylate (Ac-AMP) and then transfers the acetyl group to tRNA to form ac(4)C34. This Streptococcus pyogenes serotype M28 (strain MGAS6180) protein is tRNA(Met) cytidine acetate ligase.